A 46-amino-acid polypeptide reads, in one-letter code: Escargot/snail protein homolog (46 aa).

C2H2-type zinc fingers lie at residues 1–4, 9–30, and 36–46; these read HIAH, CKCP…IRTH, and SVCQHCNRAFA.

Belongs to the snail C2H2-type zinc-finger protein family.

It is found in the nucleus. This is Escargot/snail protein homolog from Lithobius forficatus (Centipede).